A 377-amino-acid polypeptide reads, in one-letter code: Queuine tRNA-ribosyltransferase (377 aa).

Asp-89 serves as the catalytic Proton acceptor. Substrate-binding positions include 89–93 (DSGGF), Asp-143, Gln-187, and Gly-214. Residues 245-251 (GVGKPED) are RNA binding. Asp-264 (nucleophile) is an active-site residue. Residues 269-273 (TRNAR) are RNA binding; important for wobble base 34 recognition. Residues Cys-302, Cys-304, Cys-307, and His-333 each contribute to the Zn(2+) site.

This sequence belongs to the queuine tRNA-ribosyltransferase family. Homodimer. Within each dimer, one monomer is responsible for RNA recognition and catalysis, while the other monomer binds to the replacement base PreQ1. Requires Zn(2+) as cofactor.

It catalyses the reaction 7-aminomethyl-7-carbaguanine + guanosine(34) in tRNA = 7-aminomethyl-7-carbaguanosine(34) in tRNA + guanine. Its pathway is tRNA modification; tRNA-queuosine biosynthesis. Functionally, catalyzes the base-exchange of a guanine (G) residue with the queuine precursor 7-aminomethyl-7-deazaguanine (PreQ1) at position 34 (anticodon wobble position) in tRNAs with GU(N) anticodons (tRNA-Asp, -Asn, -His and -Tyr). Catalysis occurs through a double-displacement mechanism. The nucleophile active site attacks the C1' of nucleotide 34 to detach the guanine base from the RNA, forming a covalent enzyme-RNA intermediate. The proton acceptor active site deprotonates the incoming PreQ1, allowing a nucleophilic attack on the C1' of the ribose to form the product. After dissociation, two additional enzymatic reactions on the tRNA convert PreQ1 to queuine (Q), resulting in the hypermodified nucleoside queuosine (7-(((4,5-cis-dihydroxy-2-cyclopenten-1-yl)amino)methyl)-7-deazaguanosine). In Shewanella piezotolerans (strain WP3 / JCM 13877), this protein is Queuine tRNA-ribosyltransferase.